The following is a 229-amino-acid chain: Small ribosomal subunit protein mS23 (229 aa).

It belongs to the mitochondrion-specific ribosomal protein mS23 family. Component of the mitochondrial small ribosomal subunit.

Its subcellular location is the mitochondrion. The chain is Small ribosomal subunit protein mS23 (RSM25) from Yarrowia lipolytica (strain CLIB 122 / E 150) (Yeast).